Consider the following 248-residue polypeptide: Ras-related protein Rab-28 (248 aa).

Residues 1–30 (MTTMGEDEAPALPKKSPLPEKIDEADVDDD) form a disordered region. GTP is bound at residue 42–50 (GDGASGKTS). Positions 64–72 (YHQTLGLDF) match the Effector region motif. GTP is bound by residues 91–95 (DIGGQ), 152–155 (NKTD), and 182–184 (SAK). The interval 227–248 (QSDASYARRSDQSRSTSVCSIT) is disordered. Over residues 239–248 (SRSTSVCSIT) the composition is skewed to polar residues.

Belongs to the small GTPase superfamily. Rab family. As to expression, expressed in amphid and phasmid ciliated sensory neurons.

The protein resides in the cell projection. It localises to the cilium membrane. It is found in the perikaryon. The protein localises to the cytoplasm. Its subcellular location is the cytoskeleton. The protein resides in the cilium axoneme. Its function is as follows. GTPase. Intraflagellar transport (IFT) cargo that undergoes bidirectional IFT along the ciliary axoneme when in active GTP-bound state in amphid and phasmid ciliated sensory neurons. Targeting and function as IFT cargo may depend on the BBSome, an IFT cargo adapter. Does not undergo IFT when in inactive GDP-bound state. May in turn play a role in cilium structure and/or function in ciliated sensory neurons. This Caenorhabditis elegans protein is Ras-related protein Rab-28.